Reading from the N-terminus, the 173-residue chain is Crossover junction endodeoxyribonuclease RuvC (173 aa).

Residues Asp-8, Glu-67, and Asp-139 contribute to the active site. The Mg(2+) site is built by Asp-8, Glu-67, and Asp-139.

It belongs to the RuvC family. Homodimer which binds Holliday junction (HJ) DNA. The HJ becomes 2-fold symmetrical on binding to RuvC with unstacked arms; it has a different conformation from HJ DNA in complex with RuvA. In the full resolvosome a probable DNA-RuvA(4)-RuvB(12)-RuvC(2) complex forms which resolves the HJ. Mg(2+) is required as a cofactor.

The protein resides in the cytoplasm. It catalyses the reaction Endonucleolytic cleavage at a junction such as a reciprocal single-stranded crossover between two homologous DNA duplexes (Holliday junction).. In terms of biological role, the RuvA-RuvB-RuvC complex processes Holliday junction (HJ) DNA during genetic recombination and DNA repair. Endonuclease that resolves HJ intermediates. Cleaves cruciform DNA by making single-stranded nicks across the HJ at symmetrical positions within the homologous arms, yielding a 5'-phosphate and a 3'-hydroxyl group; requires a central core of homology in the junction. The consensus cleavage sequence is 5'-(A/T)TT(C/G)-3'. Cleavage occurs on the 3'-side of the TT dinucleotide at the point of strand exchange. HJ branch migration catalyzed by RuvA-RuvB allows RuvC to scan DNA until it finds its consensus sequence, where it cleaves and resolves the cruciform DNA. In Aeromonas hydrophila subsp. hydrophila (strain ATCC 7966 / DSM 30187 / BCRC 13018 / CCUG 14551 / JCM 1027 / KCTC 2358 / NCIMB 9240 / NCTC 8049), this protein is Crossover junction endodeoxyribonuclease RuvC.